The sequence spans 540 residues: Phosphoenolpyruvate carboxykinase (ATP) (540 aa).

Residue Arg-65 participates in substrate binding. Lys-87 bears the N6-acetyllysine mark. The substrate site is built by Tyr-207 and Lys-213. Residues Lys-213, His-232, and 248–256 contribute to the ATP site; that span reads GLSGTGKTT. Mn(2+) is bound by residues Lys-213 and His-232. Asp-269 is a binding site for Mn(2+). Residues Glu-297, Arg-333, 449–450, and Thr-455 contribute to the ATP site; that span reads RI. Arg-333 is a substrate binding site. Lys-523 carries the post-translational modification N6-acetyllysine.

This sequence belongs to the phosphoenolpyruvate carboxykinase (ATP) family. Monomer. It depends on Mn(2+) as a cofactor.

It is found in the cytoplasm. It catalyses the reaction oxaloacetate + ATP = phosphoenolpyruvate + ADP + CO2. It participates in carbohydrate biosynthesis; gluconeogenesis. Functionally, involved in the gluconeogenesis. Catalyzes the conversion of oxaloacetate (OAA) to phosphoenolpyruvate (PEP) through direct phosphoryl transfer between the nucleoside triphosphate and OAA. In Escherichia coli O157:H7, this protein is Phosphoenolpyruvate carboxykinase (ATP).